Here is a 543-residue protein sequence, read N- to C-terminus: Chaperonin GroEL 1 (543 aa).

Residues 29–32 (TLGP), 86–90 (DGTTT), Gly-413, 479–481 (NAA), and Asp-495 contribute to the ATP site.

The protein belongs to the chaperonin (HSP60) family. Forms a cylinder of 14 subunits composed of two heptameric rings stacked back-to-back. Interacts with the co-chaperonin GroES.

It is found in the cytoplasm. It catalyses the reaction ATP + H2O + a folded polypeptide = ADP + phosphate + an unfolded polypeptide.. Functionally, together with its co-chaperonin GroES, plays an essential role in assisting protein folding. The GroEL-GroES system forms a nano-cage that allows encapsulation of the non-native substrate proteins and provides a physical environment optimized to promote and accelerate protein folding. In Prochlorococcus marinus (strain NATL2A), this protein is Chaperonin GroEL 1.